Consider the following 433-residue polypeptide: D-amino acid dehydrogenase (433 aa).

3 to 17 (VVILGSGVVGVASAW) is an FAD binding site.

This sequence belongs to the DadA oxidoreductase family. FAD is required as a cofactor.

It catalyses the reaction a D-alpha-amino acid + A + H2O = a 2-oxocarboxylate + AH2 + NH4(+). It participates in amino-acid degradation; D-alanine degradation; NH(3) and pyruvate from D-alanine: step 1/1. Its function is as follows. Oxidative deamination of D-amino acids. The protein is D-amino acid dehydrogenase of Erwinia tasmaniensis (strain DSM 17950 / CFBP 7177 / CIP 109463 / NCPPB 4357 / Et1/99).